Here is a 558-residue protein sequence, read N- to C-terminus: C4b-binding protein alpha chain (558 aa).

A signal peptide spans 1–13; sequence MSLTAALWVAVFG. 8 consecutive Sushi domains span residues 14–74, 75–136, 137–201, 202–260, 261–326, 327–388, 389–445, and 446–503; these read KCGP…ACVK, KSCR…ECVI, AKCG…TCER, IICP…VCEL, NSCT…GCKE, ICCP…SCHQ, SCDF…QCKA, and LCRK…RCEQ. Intrachain disulfides connect C15–C60, C45–C72, C77–C118, C104–C134, C139–C182, C168–C199, C204–C246, C232–C258, C263–C312, C296–C324, C329–C373, C363–C386, C390–C431, C417–C443, C447–C488, and C474–C501. N31 carries N-linked (GlcNAc...) asparagine glycosylation. Residues N177 and N186 are each glycosylated (N-linked (GlcNAc...) asparagine). N-linked (GlcNAc...) asparagine glycosylation is found at N469 and N491.

Disulfide-linked complex of alpha and beta chains.

The protein resides in the secreted. In terms of biological role, controls the classical pathway of complement activation. It binds as a cofactor to C3b/C4b inactivator (C3bINA), which then hydrolyzes the complement fragment C4b. It also accelerates the degradation of the C4bC2a complex (C3 convertase) by dissociating the complement fragment C2a. Alpha chain binds C4b. It also interacts with anticoagulant protein S and with serum amyloid P component. The chain is C4b-binding protein alpha chain (C4bpa) from Rattus norvegicus (Rat).